A 578-amino-acid chain; its full sequence is Laccase-10 (578 aa).

The first 29 residues, 1–29 (MGARCLALLLLYGTLLLLLLLPQLPLAGA), serve as a signal peptide directing secretion. Plastocyanin-like domains follow at residues 37–153 (NVKL…PKAG) and 163–319 (KDVP…YAPP). 2 N-linked (GlcNAc...) asparagine glycosylation sites follow: Asn-42 and Asn-83. Cu cation contacts are provided by His-87 and His-89. N-linked (GlcNAc...) asparagine glycosylation is present at Asn-119. Cu cation-binding residues include His-132 and His-134. 13 N-linked (GlcNAc...) asparagine glycosylation sites follow: Asn-192, Asn-208, Asn-244, Asn-307, Asn-336, Asn-384, Asn-392, Asn-402, Asn-438, Asn-445, Asn-448, Asn-451, and Asn-461. A Plastocyanin-like 3 domain is found at 428–562 (DFPASPLEPF…KMAWVVNDGP (135 aa)). 7 residues coordinate Cu cation: His-479, His-482, His-484, His-541, Cys-542, His-543, and His-547.

The protein belongs to the multicopper oxidase family. It depends on Cu cation as a cofactor.

Its subcellular location is the secreted. The protein localises to the extracellular space. The protein resides in the apoplast. It catalyses the reaction 4 hydroquinone + O2 = 4 benzosemiquinone + 2 H2O. Its function is as follows. Lignin degradation and detoxification of lignin-derived products. This chain is Laccase-10 (LAC10), found in Oryza sativa subsp. japonica (Rice).